Here is a 339-residue protein sequence, read N- to C-terminus: Probable N5-carboxyaminoimidazole ribonucleotide mutase (339 aa).

Substrate-binding residues include Ser-11, Asp-14, and Arg-41.

It belongs to the AIR carboxylase family. Class I subfamily.

The enzyme catalyses 5-carboxyamino-1-(5-phospho-D-ribosyl)imidazole + H(+) = 5-amino-1-(5-phospho-D-ribosyl)imidazole-4-carboxylate. The protein operates within purine metabolism; IMP biosynthesis via de novo pathway; 5-amino-1-(5-phospho-D-ribosyl)imidazole-4-carboxylate from 5-amino-1-(5-phospho-D-ribosyl)imidazole (N5-CAIR route): step 2/2. In terms of biological role, catalyzes the conversion of N5-carboxyaminoimidazole ribonucleotide (N5-CAIR) to 4-carboxy-5-aminoimidazole ribonucleotide (CAIR). The chain is Probable N5-carboxyaminoimidazole ribonucleotide mutase from Methanobrevibacter smithii.